A 290-amino-acid polypeptide reads, in one-letter code: Pyridoxal 5'-phosphate synthase subunit PdxS (290 aa).

D22 is a D-ribose 5-phosphate binding site. K79 acts as the Schiff-base intermediate with D-ribose 5-phosphate in catalysis. G151 contacts D-ribose 5-phosphate. Residue R163 participates in D-glyceraldehyde 3-phosphate binding. D-ribose 5-phosphate is bound by residues G212 and 233–234; that span reads GS.

Belongs to the PdxS/SNZ family. As to quaternary structure, in the presence of PdxT, forms a dodecamer of heterodimers.

It carries out the reaction aldehydo-D-ribose 5-phosphate + D-glyceraldehyde 3-phosphate + L-glutamine = pyridoxal 5'-phosphate + L-glutamate + phosphate + 3 H2O + H(+). Its pathway is cofactor biosynthesis; pyridoxal 5'-phosphate biosynthesis. In terms of biological role, catalyzes the formation of pyridoxal 5'-phosphate from ribose 5-phosphate (RBP), glyceraldehyde 3-phosphate (G3P) and ammonia. The ammonia is provided by the PdxT subunit. Can also use ribulose 5-phosphate and dihydroxyacetone phosphate as substrates, resulting from enzyme-catalyzed isomerization of RBP and G3P, respectively. The polypeptide is Pyridoxal 5'-phosphate synthase subunit PdxS (Clostridium botulinum (strain Loch Maree / Type A3)).